The chain runs to 596 residues: Pentatricopeptide repeat-containing protein At5g38730 (596 aa).

PPR repeat units lie at residues 132-166, 167-201, 202-236, 237-271, 272-302, 306-340, 341-375, 376-410, 411-445, 446-480, 481-515, and 516-550; these read VSHV…GLKP, HLQA…GVVA, NIHV…GVFP, DIFT…GVAP, NIVT…IKDD, NHVT…GFSP, GVVT…KIEP, DNIT…GLKL, DMYS…GFSP, GYAT…GLCA, DVAL…GLVG, and DSVI…RLMV.

It belongs to the PPR family. P subfamily.

This is Pentatricopeptide repeat-containing protein At5g38730 from Arabidopsis thaliana (Mouse-ear cress).